The chain runs to 169 residues: Phosphopantetheine adenylyltransferase (169 aa).

Serine 10 is a binding site for substrate. ATP-binding positions include serine 10–phenylalanine 11 and histidine 18. Residues lysine 42, threonine 79, and arginine 93 each coordinate substrate. ATP is bound by residues glycine 94–arginine 96, glutamate 104, and valine 129–threonine 135.

Belongs to the bacterial CoaD family. As to quaternary structure, homohexamer. Mg(2+) is required as a cofactor.

Its subcellular location is the cytoplasm. The enzyme catalyses (R)-4'-phosphopantetheine + ATP + H(+) = 3'-dephospho-CoA + diphosphate. The protein operates within cofactor biosynthesis; coenzyme A biosynthesis; CoA from (R)-pantothenate: step 4/5. Its function is as follows. Reversibly transfers an adenylyl group from ATP to 4'-phosphopantetheine, yielding dephospho-CoA (dPCoA) and pyrophosphate. The polypeptide is Phosphopantetheine adenylyltransferase (Rhodopseudomonas palustris (strain TIE-1)).